The sequence spans 95 residues: Small ubiquitin-related modifier 4 (95 aa).

The region spanning 17–95 (HINLKVAGQD…VLQQQTGGVY (79 aa)) is the Ubiquitin-like domain. G93 is covalently cross-linked (Glycyl lysine isopeptide (Gly-Lys) (interchain with K-? in acceptor proteins)). A propeptide spanning residues 94–95 (VY) is cleaved from the precursor.

This sequence belongs to the ubiquitin family. SUMO subfamily. As to quaternary structure, interacts with SAE2. Covalently attached to a number of proteins.

Ubiquitin-like protein which can be covalently attached to target lysines as a monomer. Does not seem to be involved in protein degradation and may modulate protein subcellular localization, stability or activity. Upon oxidative stress, conjugates to various anti-oxidant enzymes, chaperones, and stress defense proteins. May also conjugate to NFKBIA, TFAP2A and FOS, negatively regulating their transcriptional activity, and to NR3C1, positively regulating its transcriptional activity. Covalent attachment to its substrates requires prior activation by the E1 complex SAE1-SAE2 and linkage to the E2 enzyme UBE2I. The protein is Small ubiquitin-related modifier 4 (SUMO4) of Sus scrofa (Pig).